A 1385-amino-acid chain; its full sequence is Coiled-coil domain-containing protein 7 (1385 aa).

Residues 299–330 (LDAEYKQMQCDFQLLSEEKLVLENELQKLKDK) are a coiled coil. The tract at residues 329–364 (DKEKTKPTNNRTKKAVKTVKKKDKGKSEDSEKKMSP) is disordered. The span at 339-352 (RTKKAVKTVKKKDK) shows a compositional bias: basic residues. Over residues 353 to 364 (GKSEDSEKKMSP) the composition is skewed to basic and acidic residues. The stretch at 374–411 (LDQVQKVARLEIENKVLQEQLKQALQEAEKAKHQLNYF) forms a coiled coil. 3 disordered regions span residues 422–545 (GKTE…SKEV), 572–752 (TESK…EPNE), and 809–834 (TKKL…LKHQ). Polar residues predominate over residues 425 to 436 (ETTMQVGNSQTK). Basic and acidic residues-rich tracts occupy residues 437 to 455 (VKGE…RKSL) and 481 to 490 (LIEKSSEKKR). Polar residues-rich tracts occupy residues 493–503 (PAISDLSQILK), 511–528 (LESS…YKSP), and 536–545 (LTTVSSSKEV). Basic and acidic residues predominate over residues 573–589 (ESKKADVSEEQLQKMTE). Polar residues predominate over residues 654–664 (RIQSETKNLKA). Basic and acidic residues-rich tracts occupy residues 665-676 (TRNESFHSHNDV) and 685-697 (QDTK…EVKK). Over residues 701 to 711 (FQDNQLSTHNE) the composition is skewed to polar residues. A compositionally biased stretch (basic and acidic residues) spans 712-726 (VPNERLVVEHQESLS).

In terms of tissue distribution, expressed in epithelium of normal cervix and cervical cancer. Overexpressed in early and interim cervical cancer.

In terms of biological role, may play a role in tumorigenesis. This chain is Coiled-coil domain-containing protein 7 (CCDC7), found in Homo sapiens (Human).